We begin with the raw amino-acid sequence, 1031 residues long: Exportin-T (1031 aa).

It belongs to the exportin family.

The protein localises to the nucleus. The protein resides in the cytoplasm. Its function is as follows. tRNA nucleus export receptor which facilitates tRNA translocation across the nuclear pore complex. Involved in pre-tRNA splicing, probably by affecting the interaction of pre-tRNA with splicing endonuclease. The sequence is that of Exportin-T (los1) from Emericella nidulans (strain FGSC A4 / ATCC 38163 / CBS 112.46 / NRRL 194 / M139) (Aspergillus nidulans).